The primary structure comprises 104 residues: Large ribosomal subunit protein uL24 (104 aa).

It belongs to the universal ribosomal protein uL24 family. Part of the 50S ribosomal subunit.

Functionally, one of two assembly initiator proteins, it binds directly to the 5'-end of the 23S rRNA, where it nucleates assembly of the 50S subunit. Its function is as follows. One of the proteins that surrounds the polypeptide exit tunnel on the outside of the subunit. The protein is Large ribosomal subunit protein uL24 of Mesorhizobium japonicum (strain LMG 29417 / CECT 9101 / MAFF 303099) (Mesorhizobium loti (strain MAFF 303099)).